We begin with the raw amino-acid sequence, 33 residues long: Alpha-amanitin proprotein (33 aa).

The propeptide occupies 1–10; that stretch reads MSDINATRLP. The residue at position 11 (I11) is a (3R,4R)-4,5-dihydroxyisoleucine; in form alpha-amanitin. (3R,4S)-4-hydroxyisoleucine; in form gamma-amanitin is present on I11. The segment at residues 11–18 is a cross-link (cyclopeptide (Ile-Pro)); that stretch reads IWGIGCNP. Positions 12-16 form a cross-link, 2'-cysteinyl-6'-hydroxytryptophan sulfoxide (Trp-Cys); sequence WGIGC. P18 carries the post-translational modification 4-hydroxyproline. The propeptide occupies 19–33; the sequence is CVGDEVTALLTRGEA.

Belongs to the MSDIN fungal toxin family. In terms of processing, processed by the macrocyclase-peptidase enzyme POPB to yield a toxic cyclic decapeptide. POPB first removes 10 residues from the N-terminus. Conformational trapping of the remaining peptide forces the enzyme to release this intermediate rather than proceed to macrocyclization. The enzyme rebinds the remaining peptide in a different conformation and catalyzes macrocyclization of the N-terminal 8 residues.

In terms of biological role, major toxin belonging to the bicyclic octapeptides amatoxins that acts by binding non-competitively to RNA polymerase II and greatly slowing the elongation of transcripts from target promoters. The sequence is that of Alpha-amanitin proprotein from Amanita fuligineoides.